Consider the following 201-residue polypeptide: ATP-dependent Clp protease proteolytic subunit (201 aa).

The active-site Nucleophile is serine 101. Histidine 126 is a catalytic residue.

It belongs to the peptidase S14 family. As to quaternary structure, component of the chloroplastic Clp protease core complex.

The protein resides in the plastid. The protein localises to the chloroplast stroma. The enzyme catalyses Hydrolysis of proteins to small peptides in the presence of ATP and magnesium. alpha-casein is the usual test substrate. In the absence of ATP, only oligopeptides shorter than five residues are hydrolyzed (such as succinyl-Leu-Tyr-|-NHMec, and Leu-Tyr-Leu-|-Tyr-Trp, in which cleavage of the -Tyr-|-Leu- and -Tyr-|-Trp bonds also occurs).. Functionally, cleaves peptides in various proteins in a process that requires ATP hydrolysis. Has a chymotrypsin-like activity. Plays a major role in the degradation of misfolded proteins. The sequence is that of ATP-dependent Clp protease proteolytic subunit from Chaetosphaeridium globosum (Charophycean green alga).